Reading from the N-terminus, the 417-residue chain is Serine hydroxymethyltransferase (417 aa).

(6S)-5,6,7,8-tetrahydrofolate is bound by residues L121 and 125–127 (GHL). The residue at position 229 (K229) is an N6-(pyridoxal phosphate)lysine. 355–357 (SPF) is a (6S)-5,6,7,8-tetrahydrofolate binding site.

The protein belongs to the SHMT family. As to quaternary structure, homodimer. The cofactor is pyridoxal 5'-phosphate.

Its subcellular location is the cytoplasm. It carries out the reaction (6R)-5,10-methylene-5,6,7,8-tetrahydrofolate + glycine + H2O = (6S)-5,6,7,8-tetrahydrofolate + L-serine. It functions in the pathway one-carbon metabolism; tetrahydrofolate interconversion. Its pathway is amino-acid biosynthesis; glycine biosynthesis; glycine from L-serine: step 1/1. Its function is as follows. Catalyzes the reversible interconversion of serine and glycine with tetrahydrofolate (THF) serving as the one-carbon carrier. This reaction serves as the major source of one-carbon groups required for the biosynthesis of purines, thymidylate, methionine, and other important biomolecules. Also exhibits THF-independent aldolase activity toward beta-hydroxyamino acids, producing glycine and aldehydes, via a retro-aldol mechanism. This chain is Serine hydroxymethyltransferase, found in Xanthomonas oryzae pv. oryzae (strain MAFF 311018).